The primary structure comprises 101 residues: Apolipoprotein C-II (101 aa).

The N-terminal stretch at 1–22 is a signal peptide; the sequence is MGTRLLPALFLVLLVLGFEVQG. Residues 23–38 form an O-glycosylated at one site region; the sequence is TQQPQQDEMPSPTFLT. Residues 66–74 are lipid binding; sequence AVDEKLRDL. Residues 78 to 101 are lipoprotein lipase cofactor; sequence STAAMSTYTGIFTDQVLSVLKGEE.

It belongs to the apolipoprotein C2 family. In terms of processing, proapolipoprotein C-II is synthesized as a sialic acid containing glycoprotein which is subsequently desialylated prior to its proteolytic processing. Post-translationally, proapolipoprotein C-II, the major form found in plasma undergoes proteolytic cleavage of its N-terminal hexapeptide to generate apolipoprotein C-II, which occurs as the minor form in plasma. Liver and intestine.

Its subcellular location is the secreted. Component of chylomicrons, very low-density lipoproteins (VLDL), low-density lipoproteins (LDL), and high-density lipoproteins (HDL) in plasma. Plays an important role in lipoprotein metabolism as an activator of lipoprotein lipase. Both proapolipoprotein C-II and apolipoprotein C-II can activate lipoprotein lipase. In normolipidemic individuals, it is mainly distributed in the HDL, whereas in hypertriglyceridemic individuals, predominantly found in the VLDL and LDL. This Homo sapiens (Human) protein is Apolipoprotein C-II (APOC2).